A 636-amino-acid polypeptide reads, in one-letter code: Signal recognition particle receptor subunit alpha (636 aa).

Disordered regions lie at residues 132–205, 217–246, and 280–314; these read APTT…ELSK, IQKH…APRV, and IRGT…TKGT. Basic and acidic residues-rich tracts occupy residues 137–146 and 153–165; these read KKFEDSEKAK and IETR…EKAK. Residue Ser177 is modified to Phosphoserine. The segment covering 217 to 238 has biased composition (basic and acidic residues); that stretch reads IQKHGKGLDKSSKSTKSDTPKE. Thr283 carries the phosphothreonine modification. Phosphoserine occurs at positions 295, 296, and 297. The segment covering 302–312 has biased composition (polar residues); sequence ATQNTKPSATK. Thr303 is modified (phosphothreonine). The tract at residues 417–634 is NG domain; that stretch reads YVVTFCGVNG…NAKAVVAALM (218 aa). GTP contacts are provided by residues 423–430 and 518–522; these read GVNGVGKS and DTAGR. Residue Thr576 is modified to Phosphothreonine. Residue 586–589 participates in GTP binding; that stretch reads TKFD.

Belongs to the GTP-binding SRP family. As to quaternary structure, heterodimer with SRPRB. Interacts with the signal recognition particle (SRP) complex subunit SRP54.

The protein resides in the endoplasmic reticulum membrane. Component of the SRP (signal recognition particle) receptor. Ensures, in conjunction with the signal recognition particle, the correct targeting of the nascent secretory proteins to the endoplasmic reticulum membrane system. Forms a guanosine 5'-triphosphate (GTP)-dependent complex with the SRP subunit SRP54. SRP receptor compaction and GTPase rearrangement drive SRP-mediated cotranslational protein translocation into the ER. The protein is Signal recognition particle receptor subunit alpha of Mus musculus (Mouse).